The following is a 396-amino-acid chain: MMKTLSLQSRAKTTALKQPKEIFAFARDIDGEFVYDQKIVKDENVSYYYLPDSKIDGSIDLQAGYAKFKKIPEEKNMSDMKCLLTALTKYEQEHNNGEKVNVDIITYRGLMTKLLALPYNLNDPVDLNVLAYDGQLFINSDEEIELARRKEEDEHKQQSMTPEKYDHMKRCEFSGYKFEAIATLPKPWADCSRQQIDKRGKKMVNNYEQYISVIKTGIGEAKMLLAGEVDCVWDYIPEDGKDVLSHYMELKTTRILESNGQVVNFEKKLFKTWAQCFLMGIRKVVYGFRDDSFFLRDVELYKTEEIPLLIKNNALTENKSGGKINCTTALKWYGAVIEWLLQEIPRDDTSKAYRVSFDPSTRTFTLRELMGNENSRLRNGEMLTSEFKQWRESIQK.

107-109 (YRG) contacts substrate. E179 contributes to the a divalent metal cation binding site. E228 provides a ligand contact to substrate. A divalent metal cation contacts are provided by D230, E249, and L250. Substrate contacts are provided by K251 and Q275.

This sequence belongs to the DXO/Dom3Z family. Interacts with RAT1; the interaction is direct, stabilizes RAT1 protein structure and stimulates its exoribonuclease activity. The interaction also stimulates RAI1 pyrophosphohydrolase activity, probably by recruiting it to mRNA substrates. A divalent metal cation serves as cofactor.

Its subcellular location is the nucleus. The enzyme catalyses a 5'-end NAD(+)-phospho-ribonucleoside in mRNA + H2O = a 5'-end phospho-ribonucleoside in mRNA + NAD(+) + H(+). The catalysed reaction is a 5'-end (N(7)-methyl 5'-triphosphoguanosine)-ribonucleoside-ribonucleotide in mRNA + H2O = a (N(7)-methyl 5'-triphosphoguanosine)-nucleoside + a 5'-end phospho-ribonucleoside in mRNA + H(+). It catalyses the reaction a 5'-end triphospho-ribonucleoside in mRNA + H2O = a 5'-end phospho-ribonucleoside in mRNA + diphosphate + H(+). Decapping enzyme for NAD-capped RNAs: specifically hydrolyzes the nicotinamide adenine dinucleotide (NAD) cap from a subset of RNAs by removing the entire NAD moiety from the 5'-end of an NAD-capped RNA. The NAD-cap is present at the 5'-end of some RNAs and snoRNAs. In contrast to the canonical 5'-end N7 methylguanosine (m7G) cap, the NAD cap promotes mRNA decay. Also acts as a non-canonical decapping enzyme that removes the entire cap structure of m7G capped or incompletely capped RNAs. Has decapping activity toward incomplete 5'-end m7G cap mRNAs such as unmethylated 5'-end-capped RNA (cap0), while it has no activity toward 2'-O-ribose methylated m7G cap (cap1). Also possesses RNA 5'-pyrophosphohydrolase activity by hydrolyzing the 5'-end triphosphate to release pyrophosphates. Stimulates exoribonuclease activity of Rat1, allowing it to degrade RNAs with stable secondary structure more effectively. This is Decapping nuclease RAI1 from Scheffersomyces stipitis (strain ATCC 58785 / CBS 6054 / NBRC 10063 / NRRL Y-11545) (Yeast).